Consider the following 208-residue polypeptide: Type 3 secretion system stator protein (208 aa).

The protein belongs to the SctL stator family. In terms of assembly, the core secretion machinery of the T3SS is composed of approximately 20 different proteins, including cytoplasmic components, a base, an export apparatus and a needle. This subunit is part of the cytosolic complex.

The protein resides in the cytoplasm. Its function is as follows. Component of the type III secretion system (T3SS), also called injectisome, which is used to inject bacterial effector proteins into eukaryotic host cells. Acts as a regulator of the HrcN/SctN ATPase activity. In Sinorhizobium fredii (strain NBRC 101917 / NGR234), this protein is Type 3 secretion system stator protein.